Reading from the N-terminus, the 321-residue chain is Transcription factor MYB60 (321 aa).

2 HTH myb-type domains span residues Lys-9–Ile-65 and Lys-66–Ile-116. DNA-binding regions (H-T-H motif) lie at residues Trp-37–Leu-61 and Trp-89–Leu-112. 2 positions are modified to S-nitrosocysteine: Cys-49 and Cys-53. Disordered stretches follow at residues Ser-196–Ile-215 and His-263–His-291. The span at Gln-206–Ile-215 shows a compositional bias: polar residues. Positions Ser-273–Lys-290 are enriched in basic and acidic residues.

As to expression, restricted to stomatal guard cells. Mostly expressed in leaves, cotyledons, hypocotyls, seeds and ripened berry skins.

Its subcellular location is the nucleus. Its function is as follows. Transcription factor involved in the regulation of gene (e.g. drought-regulated and flavonoid biosynthetic genes) expression and stomatal movements leading to negative regulation of responses to drought and responses to other physiological stimuli (e.g. light). The polypeptide is Transcription factor MYB60 (Vitis vinifera (Grape)).